Consider the following 395-residue polypeptide: Putative 8-amino-7-oxononanoate synthase (395 aa).

Arg-23 contacts substrate. 110–111 provides a ligand contact to pyridoxal 5'-phosphate; it reads GF. Position 135 (His-135) interacts with substrate. Residues Ser-182, 207–210, and 239–242 contribute to the pyridoxal 5'-phosphate site; these read DEAH and TFSK. At Lys-242 the chain carries N6-(pyridoxal phosphate)lysine. A substrate-binding site is contributed by Thr-356.

This sequence belongs to the class-II pyridoxal-phosphate-dependent aminotransferase family. BioF subfamily. In terms of assembly, homodimer. Requires pyridoxal 5'-phosphate as cofactor.

It carries out the reaction 6-carboxyhexanoyl-[ACP] + L-alanine + H(+) = (8S)-8-amino-7-oxononanoate + holo-[ACP] + CO2. It participates in cofactor biosynthesis; biotin biosynthesis. Functionally, catalyzes the decarboxylative condensation of pimeloyl-[acyl-carrier protein] and L-alanine to produce 8-amino-7-oxononanoate (AON), [acyl-carrier protein], and carbon dioxide. This chain is Putative 8-amino-7-oxononanoate synthase (bioF), found in Bacillus anthracis.